Here is a 28-residue protein sequence, read N- to C-terminus: Basic phospholipase A2 homolog BmatTX-II (28 aa).

Monomer. In terms of tissue distribution, expressed by the venom gland.

It localises to the secreted. Functionally, snake venom phospholipase A2 homolog that lacks enzymatic activity. Shows high myotoxic activity, neutrophil activation (demonstrated by activation induction of IL-1beta production), and slight cytotoxicity against Jurkat (leukemia T) and SK-BR-3 (breast adenocarcinoma) tumor cell lines. A model of myotoxic mechanism has been proposed: an apo Lys49-PLA2 is activated by the entrance of a hydrophobic molecule (e.g. fatty acid) at the hydrophobic channel of the protein leading to a reorientation of a monomer. This reorientation causes a transition between 'inactive' to 'active' states, causing alignment of C-terminal and membrane-docking sites (MDoS) side-by-side and putting the membrane-disruption sites (MDiS) in the same plane, exposed to solvent and in a symmetric position for both monomers. The MDoS region stabilizes the toxin on membrane by the interaction of charged residues with phospholipid head groups. Subsequently, the MDiS region destabilizes the membrane with penetration of hydrophobic residues. This insertion causes a disorganization of the membrane, allowing an uncontrolled influx of ions (i.e. calcium and sodium), and eventually triggering irreversible intracellular alterations and cell death. This Bothrops mattogrossensis (Pitviper) protein is Basic phospholipase A2 homolog BmatTX-II.